The chain runs to 315 residues: CAAX prenyl protease 2 (315 aa).

The Lumenal portion of the chain corresponds to 1-3 (MLQ). Residues 4-23 (FSTFLVLLYISISYVLPLYA) form a helical membrane-spanning segment. Residues 24–44 (TSQPEGSKRDNPRTIKSRMQK) lie on the Cytoplasmic side of the membrane. Residues 45–65 (LTIMLISNLFLVPFLQSQLSS) form a helical membrane-spanning segment. The Lumenal portion of the chain corresponds to 66-74 (TTSHISFKD). Residues 75–95 (AFLGLGIIPGYYAALPNPWQF) traverse the membrane as a helical segment. Residues 96–105 (SQFVKDLTKC) lie on the Cytoplasmic side of the membrane. The helical transmembrane segment at 106–126 (VAMLLTLYCGPVLDFVLYHLL) threads the bilayer. At 127–148 (NPKSSILEDFYHEFLNIWSFRN) the chain is on the lumenal side. Residues 149–169 (FIFAPITEEIFYTSMLLTTYL) traverse the membrane as a helical segment. Active-site proton donor/acceptor residues include E156 and H194. The Cytoplasmic portion of the chain corresponds to 170 to 208 (NLIPHSQLSYQQLFWQPSLFFGLAHAHHAYEQLQEGSMT). Residues 209 to 229 (TVSILLTTCFQILYTTLFGGL) traverse the membrane as a helical segment. Topologically, residues 230 to 237 (TKFVFVRT) are lumenal. Residues 238-258 (GGNLWCCIILHALCNIMGFPG) form a helical membrane-spanning segment. At 259 to 275 (PSRLNLHFTVVDKKAGR) the chain is on the cytoplasmic side. Residues 276-296 (ISKLVSIWNKCYFALLVLGLI) form a helical membrane-spanning segment. Over 297–315 (SLKDTLQTLVGTPGYRITL) the chain is Lumenal.

It belongs to the peptidase U48 family.

Its subcellular location is the endoplasmic reticulum membrane. The enzyme catalyses Hydrolyzes the peptide bond -P2-(S-farnesyl or geranylgeranyl)C-P1'-P2'-P3'-COOH where P1' and P2' are amino acids with aliphatic sidechains and P3' is any C-terminal residue.. In terms of biological role, protease involved in the processing of a variety of prenylated proteins containing the C-terminal CAAX motif, where C is a cysteine modified with an isoprenoid lipid, A is an aliphatic amino acid and X is any C-terminal amino acid. Proteolytically removes the C-terminal three residues of farnesylated proteins, leaving the prenylated cysteine as the new C-terminus. Target proteins include the a-factor mating pheromone and RAS. Its substrate specificity is overlapping but distinct with that of STE24. The protein is CAAX prenyl protease 2 (RCE1) of Saccharomyces cerevisiae (strain ATCC 204508 / S288c) (Baker's yeast).